We begin with the raw amino-acid sequence, 543 residues long: Mannuronan C5-epimerase (543 aa).

A signal peptide spans 1 to 35 (MPDISLSIPRRRLPRLRPLAAAVLGAVLLHGQAWA). PbH1 repeat units lie at residues 243-270 (GAEVYLSNSTFTSFGYNASKAYGISISQ), 283-304 (RPKGWVIDSTIVDSWYGFYCYE), 305-327 (ADDLVVKGNTYRDNIVYGIDPHD), 329-352 (SHRLIIADNTVHGTRKKHGIIVSR), 354-376 (VNDSFIFNNRSYENKLSGIVLDR), 378-400 (SEGNLVAYNEVYRNHSDGITLYE), and 401-423 (SGDNLLWGNQVLANRRHGIRVRN). The active-site Proton acceptor is the His-326.

It belongs to the D-mannuronate C5-epimerase family.

Its subcellular location is the periplasm. It carries out the reaction [(1-&gt;4)-beta-D-mannuronosyl](n) = [alginate](n). It participates in glycan biosynthesis; alginate biosynthesis. Inhibited by the presence of acetyl groups on the substrate. Its function is as follows. Catalyzes the epimerization of beta-D-mannuronate to alpha-L-guluronate during the synthesis of the linear polysaccharide alginate. In addition, is part of a periplasmic protein complex that protects alginate from degradation by AlgL by channeling the newly formed alginate polymer through a scaffold that transfers the alginate polymer through the periplasmic space to the outer membrane secretin AlgE. In Pseudomonas aeruginosa (strain ATCC 15692 / DSM 22644 / CIP 104116 / JCM 14847 / LMG 12228 / 1C / PRS 101 / PAO1), this protein is Mannuronan C5-epimerase.